We begin with the raw amino-acid sequence, 55 residues long: Large ribosomal subunit protein bL33 (55 aa).

It belongs to the bacterial ribosomal protein bL33 family.

This is Large ribosomal subunit protein bL33 from Leifsonia xyli subsp. xyli (strain CTCB07).